The sequence spans 333 residues: Structure-specific endonuclease subunit SLX1 homolog (333 aa).

Residues 68–157 enclose the GIY-YIG domain; that stretch reads DFFGVYCLLS…KSRRLRLLNL (90 aa). The segment at 237-293 adopts an SLX1-type zinc-finger fold; sequence CSLCLKPILSISELLRCHANETCKSHFHMRCLSKHALNAVDEYRTSLFPIQGQCPKC.

Belongs to the SLX1 family. As to quaternary structure, forms a heterodimer with a member of the SLX4 family. Requires a divalent metal cation as cofactor.

It is found in the nucleus. In terms of biological role, catalytic subunit of a heterodimeric structure-specific endonuclease that resolves DNA secondary structures generated during DNA repair and recombination. Has endonuclease activity towards branched DNA substrates, introducing single-strand cuts in duplex DNA close to junctions with ss-DNA. The protein is Structure-specific endonuclease subunit SLX1 homolog of Brugia malayi (Filarial nematode worm).